The following is a 676-amino-acid chain: ATP-dependent RNA helicase dbp-9 (676 aa).

Residues 1 to 97 form a disordered region; sequence MAKRKLNETD…SEKDDADLTF (97 aa). Residues 70–90 show a composition bias toward basic and acidic residues; it reads QQLKDEQKQQDEKDEKKQSEK. The Q motif motif lies at 95–123; that stretch reads LTFSDLGLDPRLVQAVAKQSFEKPTLVQR. In terms of domain architecture, Helicase ATP-binding spans 126–304; the sequence is IPLALAGQDV…KGFFCRNPTM (179 aa). 139-146 contributes to the ATP binding site; it reads AKTGSGKT. The short motif at 251–254 is the DEAD box element; the sequence is DEAD. Residues 317–541 form the Helicase C-terminal domain; sequence KLTQFYVKCG…PYNFNKDQME (225 aa). Basic and acidic residues predominate over residues 410–432; that stretch reads EDEKTEEKKEEQGEKKEGDEKKN. Disordered regions lie at residues 410 to 444 and 633 to 676; these read EDEKTEEKKEEQGEKKEGDEKKNGKGKKKKGRRDQ and FKKQ…RVRK. The segment covering 642–663 has biased composition (basic residues); that stretch reads TRGKKGAKGGKGGHGKYKKGPG.

Belongs to the DEAD box helicase family. DDX56/DBP9 subfamily.

The protein localises to the nucleus. It localises to the nucleolus. The catalysed reaction is ATP + H2O = ADP + phosphate + H(+). ATP-binding RNA helicase involved in the biogenesis of 60S ribosomal subunits and is required for the normal formation of 25S and 5.8S rRNAs. This Neurospora crassa (strain ATCC 24698 / 74-OR23-1A / CBS 708.71 / DSM 1257 / FGSC 987) protein is ATP-dependent RNA helicase dbp-9 (dbp-9).